Consider the following 166-residue polypeptide: Lipoprotein signal peptidase (166 aa).

3 helical membrane-spanning segments follow: residues 10–30, 68–88, and 94–114; these read LIWL…KAWV, WQLW…AFWL, and GHWR…GNVI. Active-site residues include Asp124 and Asp142. The helical transmembrane segment at 138–158 threads the bilayer; sequence FNIADSAIVGGAIGIAVFGLF.

It belongs to the peptidase A8 family.

It is found in the cell inner membrane. It catalyses the reaction Release of signal peptides from bacterial membrane prolipoproteins. Hydrolyzes -Xaa-Yaa-Zaa-|-(S,diacylglyceryl)Cys-, in which Xaa is hydrophobic (preferably Leu), and Yaa (Ala or Ser) and Zaa (Gly or Ala) have small, neutral side chains.. It participates in protein modification; lipoprotein biosynthesis (signal peptide cleavage). In terms of biological role, this protein specifically catalyzes the removal of signal peptides from prolipoproteins. This Xanthomonas oryzae pv. oryzae (strain MAFF 311018) protein is Lipoprotein signal peptidase.